Here is a 183-residue protein sequence, read N- to C-terminus: Gamma-crystallin N (183 aa).

Beta/gamma crystallin 'Greek key' domains follow at residues 6-46 (GKIT…RVES), 47-89 (GAWV…RPVG), 95-136 (FRID…KVYG), and 138-180 (GAWV…RRVL).

This sequence belongs to the beta/gamma-crystallin family. Monomer. In terms of tissue distribution, primordially eye-specific. Present in lens nucleus. In the retina, expression in observed in the outer plexiform layer (containing photoreceptors axons and synapses) and photoreceptor outer segments (at protein level). Also detected in the auditory hindbrain where it is highly expressed in the medial nucleus of the trapezoid body, but also present in other nuclei of the superior olivary complex.

In terms of biological role, crystallins are the dominant structural components of the vertebrate eye lens. Also plays an important role for integrity and function of auditory nuclei. The protein is Gamma-crystallin N of Mus musculus (Mouse).